We begin with the raw amino-acid sequence, 648 residues long: Acetyl-coenzyme A synthetase (648 aa).

CoA contacts are provided by residues 190-193 (RGGR) and threonine 310. ATP contacts are provided by residues 386–388 (GEP), 410–415 (DTWWQT), aspartate 499, and arginine 514. Position 522 (serine 522) interacts with CoA. Arginine 525 lines the ATP pocket. Valine 536, histidine 538, and valine 541 together coordinate Mg(2+). Arginine 583 is a binding site for CoA. Lysine 608 is subject to N6-acetyllysine.

Belongs to the ATP-dependent AMP-binding enzyme family. It depends on Mg(2+) as a cofactor. In terms of processing, acetylated. Deacetylation by the SIR2-homolog deacetylase activates the enzyme.

The catalysed reaction is acetate + ATP + CoA = acetyl-CoA + AMP + diphosphate. In terms of biological role, catalyzes the conversion of acetate into acetyl-CoA (AcCoA), an essential intermediate at the junction of anabolic and catabolic pathways. AcsA undergoes a two-step reaction. In the first half reaction, AcsA combines acetate with ATP to form acetyl-adenylate (AcAMP) intermediate. In the second half reaction, it can then transfer the acetyl group from AcAMP to the sulfhydryl group of CoA, forming the product AcCoA. The polypeptide is Acetyl-coenzyme A synthetase (Methylobacterium radiotolerans (strain ATCC 27329 / DSM 1819 / JCM 2831 / NBRC 15690 / NCIMB 10815 / 0-1)).